A 342-amino-acid polypeptide reads, in one-letter code: N-acetyl-gamma-glutamyl-phosphate reductase (342 aa).

The active site involves C149.

It belongs to the NAGSA dehydrogenase family. Type 1 subfamily.

Its subcellular location is the cytoplasm. The catalysed reaction is N-acetyl-L-glutamate 5-semialdehyde + phosphate + NADP(+) = N-acetyl-L-glutamyl 5-phosphate + NADPH + H(+). Its pathway is amino-acid biosynthesis; L-arginine biosynthesis; N(2)-acetyl-L-ornithine from L-glutamate: step 3/4. Its function is as follows. Catalyzes the NADPH-dependent reduction of N-acetyl-5-glutamyl phosphate to yield N-acetyl-L-glutamate 5-semialdehyde. The protein is N-acetyl-gamma-glutamyl-phosphate reductase of Cereibacter sphaeroides (strain ATCC 17029 / ATH 2.4.9) (Rhodobacter sphaeroides).